A 303-amino-acid chain; its full sequence is Biphenyl-2,3-diol 1,2-dioxygenase (303 aa).

VOC domains lie at Ser-5 to Gly-119 and Gly-143 to Ser-264. Fe cation contacts are provided by His-146, His-210, and Glu-260. The interval Trp-283 to Glu-303 is disordered. The span at Ser-287 to Glu-303 shows a compositional bias: basic and acidic residues.

Belongs to the extradiol ring-cleavage dioxygenase family. Homooctamer. Fe(2+) is required as a cofactor.

It carries out the reaction biphenyl-2,3-diol + O2 = 2-hydroxy-6-oxo-6-phenylhexa-2,4-dienoate + H(+). It functions in the pathway xenobiotic degradation; biphenyl degradation; 2-hydroxy-2,4-pentadienoate and benzoate from biphenyl: step 3/4. The polypeptide is Biphenyl-2,3-diol 1,2-dioxygenase (bphC) (Metapseudomonas furukawaii (Pseudomonas furukawaii)).